A 139-amino-acid chain; its full sequence is Protein archease (139 aa).

Residues D12, D138, and I139 each coordinate Ca(2+).

It belongs to the archease family.

Its function is as follows. Activates the tRNA-splicing ligase complex by facilitating the enzymatic turnover of catalytic subunit RtcB. Acts by promoting the guanylylation of RtcB, a key intermediate step in tRNA ligation. Can also alter the NTP specificity of RtcB such that ATP, dGTP or ITP is used efficiently. This chain is Protein archease, found in Saccharolobus islandicus (strain Y.G.57.14 / Yellowstone #1) (Sulfolobus islandicus).